The primary structure comprises 426 residues: Serine--tRNA ligase (426 aa).

Residue 229–231 (TAE) participates in L-serine binding. ATP-binding positions include 260–262 (RKE) and Val-276. Glu-283 serves as a coordination point for L-serine. Residue 349 to 352 (EVTS) participates in ATP binding. Position 384 (Thr-384) interacts with L-serine.

This sequence belongs to the class-II aminoacyl-tRNA synthetase family. Type-1 seryl-tRNA synthetase subfamily. In terms of assembly, homodimer. The tRNA molecule binds across the dimer.

The protein localises to the cytoplasm. It catalyses the reaction tRNA(Ser) + L-serine + ATP = L-seryl-tRNA(Ser) + AMP + diphosphate + H(+). The enzyme catalyses tRNA(Sec) + L-serine + ATP = L-seryl-tRNA(Sec) + AMP + diphosphate + H(+). It functions in the pathway aminoacyl-tRNA biosynthesis; selenocysteinyl-tRNA(Sec) biosynthesis; L-seryl-tRNA(Sec) from L-serine and tRNA(Sec): step 1/1. Its function is as follows. Catalyzes the attachment of serine to tRNA(Ser). Is also able to aminoacylate tRNA(Sec) with serine, to form the misacylated tRNA L-seryl-tRNA(Sec), which will be further converted into selenocysteinyl-tRNA(Sec). The protein is Serine--tRNA ligase of Treponema pallidum (strain Nichols).